We begin with the raw amino-acid sequence, 739 residues long: MAPWLQLCSVFFTVNACLNGSQLAVAAGGSGRARGADTCGWRGVGPASRNSGLYNITFKYDNCTTYLNPVGKHVIADAQNITISQYACHDQVAVTILWSPGALGIEFLKGFRVILEELKSEGRQCQQLILKDPKQLNSSFKRTGMESQPFLNMKFETDYFVKVVPFPSIKNESNYHPFFFRTRACDLLLQPDNLACKPFWKPRNLNISQHGSDMQVSFDHAPHNFGFRFFYLHYKLKHEGPFKRKTCKQEQTTETTSCLLQNVSPGDYIIELVDDTNTTRKVMHYALKPVHSPWAGPIRAVAITVPLVVISAFATLFTVMCRKKQQENIYSHLDEESSESSTYTAALPRERLRPRPKVFLCYSSKDGQNHMNVVQCFAYFLQDFCGCEVALDLWEDFSLCREGQREWVIQKIHESQFIIVVCSKGMKYFVDKKNYKHKGGGRGSGKGELFLVAVSAIAEKLRQAKQSSSAALSKFIAVYFDYSCEGDVPGILDLSTKYRLMDNLPQLCSHLHSRDHGLQEPGQHTRQGSRRNYFRSKSGRSLYVAICNMHQFIDEEPDWFEKQFVPFHPPPLRYREPVLEKFDSGLVLNDVMCKPGPESDFCLKVEAAVLGATGPADSQHESQHGGLDQDGEARPALDGSAALQPLLHTVKAGSPSDMPRDSGIYDSSVPSSELSLPLMEGLSTDQTETSSLTESVSSSSGLGEEEPPALPSKLLSSGSCKADLGCRSYTDELHAVAPL.

The signal sequence occupies residues 1–16 (MAPWLQLCSVFFTVNA). The Extracellular segment spans residues 17-299 (CLNGSQLAVA…VHSPWAGPIR (283 aa)). N-linked (GlcNAc...) asparagine glycosylation is found at asparagine 19, asparagine 55, asparagine 62, asparagine 80, asparagine 137, asparagine 171, asparagine 206, and asparagine 277. The helical transmembrane segment at 300–320 (AVAITVPLVVISAFATLFTVM) threads the bilayer. Residues 321–739 (CRKKQQENIY…TDELHAVAPL (419 aa)) are Cytoplasmic-facing. The SEFIR domain maps to 355–509 (RPKVFLCYSS…LMDNLPQLCS (155 aa)). Disordered stretches follow at residues 614-635 (GPAD…EARP) and 650-719 (VKAG…SSGS). Positions 667-702 (SSVPSSELSLPLMEGLSTDQTETSSLTESVSSSSGL) are enriched in low complexity.

In terms of assembly, interacts with MAP3K7. Self-associates. Interacts with FGFR1, FGFR2 and phosphorylated MAP2K1 or MAP2K2. Associates with a MAP2K1/2-MAPK1/3 complex. In terms of tissue distribution, expressed in umbilical vein endothelial cells and in several highly vascularized tissues such as kidney, colon, skeletal muscle, heart and small intestine. Highly expressed in ductal epithelial cells of salivary glands, seminal vesicles and the collecting tubules of the kidney. Isoform 1 is also highly expressed in both fetal and adult brain, pituitary, tonsils, spleen, adenoids, fetal kidney, liver, testes and ovary. Isoform 1 is also expressed at moderate levels in primary aortic endothelial cells and adrenal medulla, and at low levels in adrenal cortex. Isoform 4 is specifically and highly expressed in pituitary, fetal brain and umbilical vein endothelial cells.

The protein localises to the golgi apparatus membrane. The protein resides in the cell membrane. It localises to the cytoplasm. In terms of biological role, feedback inhibitor of fibroblast growth factor mediated Ras-MAPK signaling and ERK activation. Regulates the nuclear ERK signaling pathway by spatially blocking nuclear translocation of activated ERK without inhibiting cytoplasmic phosphorylation of ERK. Mediates JNK activation and may be involved in apoptosis. May inhibit FGF-induced FGFR1 tyrosine phosphorylation. Might have a role in the early stages of fate specification of GnRH-secreting neurons. Inhibits TGFB-induced epithelial-to-mesenchymal transition in lens epithelial cells. The sequence is that of Interleukin-17 receptor D (IL17RD) from Homo sapiens (Human).